The following is a 468-amino-acid chain: Adenosylhomocysteinase (468 aa).

Substrate-binding residues include Thr63, Asp139, and Glu164. Residue 165–167 (TTT) coordinates NAD(+). Residues Lys194 and Asp198 each contribute to the substrate site. NAD(+) is bound by residues Asn199, 228 to 233 (GYGDVG), Glu251, Asn300, 321 to 323 (IGH), and Asn374.

Belongs to the adenosylhomocysteinase family. The cofactor is NAD(+).

The protein localises to the cytoplasm. The enzyme catalyses S-adenosyl-L-homocysteine + H2O = L-homocysteine + adenosine. The protein operates within amino-acid biosynthesis; L-homocysteine biosynthesis; L-homocysteine from S-adenosyl-L-homocysteine: step 1/1. Functionally, may play a key role in the regulation of the intracellular concentration of adenosylhomocysteine. The chain is Adenosylhomocysteinase from Stutzerimonas stutzeri (strain A1501) (Pseudomonas stutzeri).